A 269-amino-acid polypeptide reads, in one-letter code: 5'-nucleotidase SurE (269 aa).

4 residues coordinate a divalent metal cation: Asp-11, Asp-12, Ser-42, and Asn-90.

This sequence belongs to the SurE nucleotidase family. Requires a divalent metal cation as cofactor.

It is found in the cytoplasm. It catalyses the reaction a ribonucleoside 5'-phosphate + H2O = a ribonucleoside + phosphate. In terms of biological role, nucleotidase that shows phosphatase activity on nucleoside 5'-monophosphates. This is 5'-nucleotidase SurE from Haloarcula marismortui (strain ATCC 43049 / DSM 3752 / JCM 8966 / VKM B-1809) (Halobacterium marismortui).